The primary structure comprises 605 residues: Alpha-amylase (605 aa).

Residues 1 to 33 (MGVRRSLAALLAALLGCATSLVALTVAASPAHA) form the signal peptide. The Ca(2+) site is built by N130 and D189. The active-site Nucleophile is D219. H223 provides a ligand contact to Ca(2+). E253 serves as the catalytic Proton donor. A CBM20 domain is found at 500–605 (GDDCTTVTAR…CSQNFYDSWR (106 aa)).

The protein belongs to the glycosyl hydrolase 13 family. As to quaternary structure, monomer. It depends on Ca(2+) as a cofactor.

The catalysed reaction is Endohydrolysis of (1-&gt;4)-alpha-D-glucosidic linkages in polysaccharides containing three or more (1-&gt;4)-alpha-linked D-glucose units.. The polypeptide is Alpha-amylase (tam) (Thermomonospora curvata).